A 273-amino-acid chain; its full sequence is Nitrogenase iron protein 4 (273 aa).

Gly-8–Ser-15 serves as a coordination point for ATP. Position 94 (Cys-94) interacts with [4Fe-4S] cluster. An ADP-ribosylarginine; by dinitrogenase reductase ADP-ribosyltransferase modification is found at Arg-97. Residue Cys-129 coordinates [4Fe-4S] cluster.

Belongs to the NifH/BchL/ChlL family. In terms of assembly, homodimer. It depends on [4Fe-4S] cluster as a cofactor. In terms of processing, the reversible ADP-ribosylation of Arg-97 inactivates the nitrogenase reductase and regulates nitrogenase activity.

It catalyses the reaction N2 + 8 reduced [2Fe-2S]-[ferredoxin] + 16 ATP + 16 H2O = H2 + 8 oxidized [2Fe-2S]-[ferredoxin] + 2 NH4(+) + 16 ADP + 16 phosphate + 6 H(+). Its function is as follows. The key enzymatic reactions in nitrogen fixation are catalyzed by the nitrogenase complex, which has 2 components: the iron protein and the molybdenum-iron protein. The polypeptide is Nitrogenase iron protein 4 (nifH4) (Clostridium pasteurianum).